The primary structure comprises 410 residues: Exopolygalacturonase (410 aa).

The N-terminal stretch at 1 to 22 (MACTNNAMRALFLLVLFCIVHG) is a signal peptide. Asparagine 89 carries N-linked (GlcNAc...) asparagine glycosylation. PbH1 repeat units lie at residues 192–218 (CKDM…HMGD), 219–240 (SSGI…SIGP), 242–262 (TSKV…SIGS), 272–293 (VTDI…RIKA), and 337–377 (ASKV…TMDD). Aspartate 233 serves as the catalytic Proton donor. Cysteines 235 and 252 form a disulfide. An N-linked (GlcNAc...) asparagine glycan is attached at asparagine 246. Histidine 256 is an active-site residue. A glycan (N-linked (GlcNAc...) asparagine) is linked at asparagine 349. Cysteines 364 and 370 form a disulfide. Residue asparagine 387 is glycosylated (N-linked (GlcNAc...) asparagine). Cysteine 393 and cysteine 409 are oxidised to a cystine.

The protein belongs to the glycosyl hydrolase 28 family. In terms of tissue distribution, pollen.

Its subcellular location is the secreted. It localises to the cell wall. It catalyses the reaction [(1-&gt;4)-alpha-D-galacturonosyl](n) + H2O = alpha-D-galacturonate + [(1-&gt;4)-alpha-D-galacturonosyl](n-1). In terms of biological role, may function in depolymerizing pectin during pollen development, germination, and tube growth. Acts as an exo-polygalacturonase. In Zea mays (Maize), this protein is Exopolygalacturonase (PG1).